The primary structure comprises 326 residues: L-lactate dehydrogenase (326 aa).

Residue 39–60 (DVVTGMPEGKALDDSQATSIAD) participates in NAD(+) binding. Substrate contacts are provided by R99, N131, and R162. Residue N131 coordinates NAD(+). Residue H186 is the Proton acceptor of the active site.

It belongs to the LDH/MDH superfamily. LDH family. Homotetramer.

The catalysed reaction is (S)-lactate + NAD(+) = pyruvate + NADH + H(+). It participates in fermentation; pyruvate fermentation to lactate; (S)-lactate from pyruvate: step 1/1. In Toxoplasma gondii, this protein is L-lactate dehydrogenase.